A 479-amino-acid polypeptide reads, in one-letter code: Catalase easC (479 aa).

Residues 1–13 are compositionally biased toward polar residues; that stretch reads MASQVSLTAQGSG. The disordered stretch occupies residues 1–28; sequence MASQVSLTAQGSGLSAPLNGPEHLTSTT. Residue His53 is part of the active site. Position 343 (Tyr343) interacts with heme. Residues 365 to 385 form a disordered region; it reads HAANDAPKTKKPAVPLQKQSR.

It belongs to the catalase family. Heme is required as a cofactor.

The protein operates within alkaloid biosynthesis; ergot alkaloid biosynthesis. Its function is as follows. Catalase; part of the gene cluster that mediates the biosynthesis of fungal ergot alkaloid. DmaW catalyzes the first step of ergot alkaloid biosynthesis by condensing dimethylallyl diphosphate (DMAP) and tryptophan to form 4-dimethylallyl-L-tryptophan. The second step is catalyzed by the methyltransferase easF that methylates 4-dimethylallyl-L-tryptophan in the presence of S-adenosyl-L-methionine, resulting in the formation of 4-dimethylallyl-L-abrine. The catalase easC and the FAD-dependent oxidoreductase easE then transform 4-dimethylallyl-L-abrine to chanoclavine-I which is further oxidized by easD in the presence of NAD(+), resulting in the formation of chanoclavine-I aldehyde. Agroclavine dehydrogenase easG then mediates the conversion of chanoclavine-I aldehyde to agroclavine via a non-enzymatic adduct reaction: the substrate is an iminium intermediate that is formed spontaneously from chanoclavine-I aldehyde in the presence of glutathione. Further conversion of agroclavine to paspalic acid is a two-step process involving oxidation of agroclavine to elymoclavine and of elymoclavine to paspalic acid, the second step being performed by the elymoclavine oxidase cloA. However, cloA does not encode a functional enzyme indicating that C.fusiformis terminates its ergot alkaloid pathway at elymoclavine. This is Catalase easC from Claviceps fusiformis (Ergot fungus).